The following is a 351-amino-acid chain: Histidinol-phosphate aminotransferase 1 (351 aa).

K210 is subject to N6-(pyridoxal phosphate)lysine.

It belongs to the class-II pyridoxal-phosphate-dependent aminotransferase family. Histidinol-phosphate aminotransferase subfamily. In terms of assembly, homodimer. Pyridoxal 5'-phosphate serves as cofactor.

The catalysed reaction is L-histidinol phosphate + 2-oxoglutarate = 3-(imidazol-4-yl)-2-oxopropyl phosphate + L-glutamate. It participates in amino-acid biosynthesis; L-histidine biosynthesis; L-histidine from 5-phospho-alpha-D-ribose 1-diphosphate: step 7/9. This Pasteurella multocida (strain Pm70) protein is Histidinol-phosphate aminotransferase 1 (hisC1).